Consider the following 310-residue polypeptide: Protein A56 (310 aa).

A signal peptide spans 1-16 (MKQLSIVILLLSIVYT). The Virion surface segment spans residues 17 to 275 (TKPHPTQISK…TKYTTSDFIE (259 aa)). The Ig-like V-type domain maps to 19-121 (PHPTQISKKL…TNDTDKIDYE (103 aa)). C36 and C105 are oxidised to a cystine. N-linked (GlcNAc...) asparagine; by host glycosylation is found at N39, N113, and N133. Residues 153-195 (HTEEQHDSDTTICTSESTTQISETSESTTSSQISETSESTSYG) are disordered. Positions 162 to 193 (TTICTSESTTQISETSESTTSSQISETSESTS) are enriched in low complexity. N-linked (GlcNAc...) asparagine; by host glycosylation occurs at N203. A helical transmembrane segment spans residues 276–300 (IFGIVSLILLLAVAIFCIIYYFCSG). The Intravirion portion of the chain corresponds to 301–310 (RSRKQETNIL).

In terms of assembly, heterodimerizes with K2. The heterodimer A56/K2 interacts with components of the entry fusion complex A16 and G9. Interacts with K2 protein. Heterodimer with C3/VPC protein; disulfide-linked. Post-translationally, glycosylated; contains phosphate and sulfate-substituted glycans. O-glycosylation is required for hemagglutination and hemadsorption activities of infected cell membranes.

It is found in the virion membrane. It localises to the host membrane. Prevents cell to cell fusion by interacting with and directing the viral K2 protein on the host plasma membrane. The A56-K2 complex associates with components of the entry fusion complex (EFC) presumably to avoid superinfection and syncytium formation. Via its interaction with C3/VCP protein, protects the infected cell and probably also the extracellular enveloped virus from complement attack. This Raccoon poxvirus (RCN) protein is Protein A56 (HA).